Reading from the N-terminus, the 229-residue chain is Potassium/proton antiporter CemA (229 aa).

Helical transmembrane passes span 7–27 (LTPLPYLASIVFLPWWISISF), 106–126 (IILHFSTNIICFAILSGYSIL), and 189–209 (IISGLVSTFPVILDTILKYWI).

The protein belongs to the CemA family.

It is found in the plastid. Its subcellular location is the chloroplast inner membrane. The catalysed reaction is K(+)(in) + H(+)(out) = K(+)(out) + H(+)(in). Contributes to K(+)/H(+) antiport activity by supporting proton efflux to control proton extrusion and homeostasis in chloroplasts in a light-dependent manner to modulate photosynthesis. Prevents excessive induction of non-photochemical quenching (NPQ) under continuous-light conditions. Indirectly promotes efficient inorganic carbon uptake into chloroplasts. The sequence is that of Potassium/proton antiporter CemA from Liriodendron tulipifera (Tuliptree).